The following is a 600-amino-acid chain: uncharacterized protein (600 aa).

4Fe-4S ferredoxin-type domains are found at residues 14–44 and 53–82; these read RLAI…MGEK and GKPV…IIGL. ABC transporter domains are found at residues 77–318 and 348–563; these read ISII…YLYG and LLSY…LKEM. ATP-binding positions include 117–124 and 380–387; these read GQNGIGKS and GPNGIGKT. A compositionally biased stretch (basic and acidic residues) spans 569-594; the sequence is RDPETGRPRANKEGSQRDIMQKEKGE. The segment at 569 to 600 is disordered; that stretch reads RDPETGRPRANKEGSQRDIMQKEKGEYYYVDE.

This sequence belongs to the ABC transporter superfamily.

This is an uncharacterized protein from Methanocaldococcus jannaschii (strain ATCC 43067 / DSM 2661 / JAL-1 / JCM 10045 / NBRC 100440) (Methanococcus jannaschii).